A 171-amino-acid polypeptide reads, in one-letter code: MAANTDRNSKPSVYLQEPNEVQGVFNRFDANGDGKISGDELAGVLKALGSNTSKEEIGRIMEEIDTDKDGFINVQEFAAFVKAETDPYPSSGGENELKEAFELYDQDHNGLISSVELHKILTRLGERYAEHDCVEMIKSVDSDGDGYVSFEEFKKMMTNKSGNNSQAEPPK.

4 EF-hand domains span residues 16 to 51 (QEPN…LGSN), 52 to 87 (TSKE…ETDP), 92 to 127 (GGEN…LGER), and 128 to 163 (YAEH…KSGN). Positions 29, 31, 33, 35, 40, 65, 67, 69, 76, 105, 107, 109, 116, 141, 143, 145, 147, and 152 each coordinate Ca(2+).

Homodimer. As to expression, expressed in pollen.

The polypeptide is Calcium-binding allergen Ole e 8 (Olea europaea (Common olive)).